The sequence spans 291 residues: NAD kinase (291 aa).

Aspartate 73 acts as the Proton acceptor in catalysis. NAD(+) contacts are provided by residues aspartate 73–glycine 74, asparagine 147–aspartate 148, arginine 175, aspartate 177, threonine 188–serine 193, alanine 212, and glutamine 246.

This sequence belongs to the NAD kinase family. A divalent metal cation is required as a cofactor.

The protein resides in the cytoplasm. The enzyme catalyses NAD(+) + ATP = ADP + NADP(+) + H(+). In terms of biological role, involved in the regulation of the intracellular balance of NAD and NADP, and is a key enzyme in the biosynthesis of NADP. Catalyzes specifically the phosphorylation on 2'-hydroxyl of the adenosine moiety of NAD to yield NADP. The sequence is that of NAD kinase from Polaromonas sp. (strain JS666 / ATCC BAA-500).